The chain runs to 380 residues: Cytochrome b (380 aa).

4 consecutive transmembrane segments (helical) span residues 34-54 (FGSLLGLCLIIQILTGLFLAM), 78-99 (WLIRNTHANGASMFFICVYLHI), 114-134 (WNIGVIILLLLMATAFVGYVL), and 179-199 (FFTFHFLLPFVIVALTMVHLL). H84 and H98 together coordinate heme b. H183 and H197 together coordinate heme b. H202 is an a ubiquinone binding site. 4 consecutive transmembrane segments (helical) span residues 227–247 (YKDLLGFFILLFFLTFLALFT), 289–309 (LGGVLALAFSILILLLVPILH), 321–341 (ISQLLFWLLVANTIILTWIGG), and 348–368 (FITIGQIASITYFSFFLILFP).

This sequence belongs to the cytochrome b family. As to quaternary structure, the cytochrome bc1 complex contains 3 respiratory subunits (MT-CYB, CYC1 and UQCRFS1), 2 core proteins (UQCRC1 and UQCRC2) and probably 6 low-molecular weight proteins. Requires heme b as cofactor.

The protein resides in the mitochondrion inner membrane. Functionally, component of the ubiquinol-cytochrome c reductase complex (complex III or cytochrome b-c1 complex) that is part of the mitochondrial respiratory chain. The b-c1 complex mediates electron transfer from ubiquinol to cytochrome c. Contributes to the generation of a proton gradient across the mitochondrial membrane that is then used for ATP synthesis. This chain is Cytochrome b (mt-cyb), found in Pastinachus sephen (Cowtail stingray).